The sequence spans 503 residues: Cysteine desulfurase, mitochondrial (503 aa).

The transit peptide at Met-1 to Val-27 directs the protein to the mitochondrion. Positions Arg-34–Ser-50 are enriched in low complexity. The tract at residues Arg-34 to Gln-58 is disordered. Residues Ala-172–Thr-173, Asn-254, Gln-282, and Ser-302–His-304 each bind pyridoxal 5'-phosphate. Lys-305 is subject to N6-(pyridoxal phosphate)lysine. Thr-342 lines the pyridoxal 5'-phosphate pocket. The active-site Cysteine persulfide intermediate is the Cys-427. Residue Cys-427 participates in [2Fe-2S] cluster binding.

This sequence belongs to the class-V pyridoxal-phosphate-dependent aminotransferase family. NifS/IscS subfamily. Requires pyridoxal 5'-phosphate as cofactor.

The protein localises to the mitochondrion. It catalyses the reaction (sulfur carrier)-H + L-cysteine = (sulfur carrier)-SH + L-alanine. Functionally, catalyzes the removal of elemental sulfur from cysteine to produce alanine. It supplies the inorganic sulfur for iron-sulfur (Fe-S) clusters. Plays a role in both tRNA-processing and mitochondrial metabolism. Involved in the 2-thio-modification of both 5-carboxymethylaminomethyl-2-thiouridine in mitochondrial tRNAs and 5-methoxycarbonylmethyl-2-thiouridine (mcm5s2U) in cytoplasmic tRNAs. The chain is Cysteine desulfurase, mitochondrial from Arthroderma benhamiae (strain ATCC MYA-4681 / CBS 112371) (Trichophyton mentagrophytes).